The primary structure comprises 124 residues: Small ribosomal subunit protein uS12 (124 aa).

Position 89 is a 3-methylthioaspartic acid (aspartate 89).

The protein belongs to the universal ribosomal protein uS12 family. As to quaternary structure, part of the 30S ribosomal subunit. Contacts proteins S8 and S17. May interact with IF1 in the 30S initiation complex.

With S4 and S5 plays an important role in translational accuracy. Its function is as follows. Interacts with and stabilizes bases of the 16S rRNA that are involved in tRNA selection in the A site and with the mRNA backbone. Located at the interface of the 30S and 50S subunits, it traverses the body of the 30S subunit contacting proteins on the other side and probably holding the rRNA structure together. The combined cluster of proteins S8, S12 and S17 appears to hold together the shoulder and platform of the 30S subunit. The chain is Small ribosomal subunit protein uS12 from Shewanella frigidimarina (strain NCIMB 400).